The sequence spans 225 residues: Methylthioribulose-1-phosphate dehydratase (225 aa).

His106 and His108 together coordinate Zn(2+).

It belongs to the aldolase class II family. MtnB subfamily. It depends on Zn(2+) as a cofactor.

The catalysed reaction is 5-(methylsulfanyl)-D-ribulose 1-phosphate = 5-methylsulfanyl-2,3-dioxopentyl phosphate + H2O. The protein operates within amino-acid biosynthesis; L-methionine biosynthesis via salvage pathway; L-methionine from S-methyl-5-thio-alpha-D-ribose 1-phosphate: step 2/6. Its function is as follows. Catalyzes the dehydration of methylthioribulose-1-phosphate (MTRu-1-P) into 2,3-diketo-5-methylthiopentyl-1-phosphate (DK-MTP-1-P). The chain is Methylthioribulose-1-phosphate dehydratase from Xanthomonas oryzae pv. oryzae (strain MAFF 311018).